The following is an 82-amino-acid chain: uncharacterized protein (82 aa).

This is an uncharacterized protein from Rickettsia prowazekii (strain Madrid E).